The sequence spans 208 residues: Urease accessory protein UreG 1 (208 aa).

14–21 (GPVGSGKT) serves as a coordination point for GTP.

Belongs to the SIMIBI class G3E GTPase family. UreG subfamily. In terms of assembly, homodimer. UreD, UreF and UreG form a complex that acts as a GTP-hydrolysis-dependent molecular chaperone, activating the urease apoprotein by helping to assemble the nickel containing metallocenter of UreC. The UreE protein probably delivers the nickel.

The protein resides in the cytoplasm. Functionally, facilitates the functional incorporation of the urease nickel metallocenter. This process requires GTP hydrolysis, probably effectuated by UreG. Disruption of the ure1 gene cluster suggests that it protects brucellae during their passage through the stomach. The major route of infection in human brucellosis is oral. The sequence is that of Urease accessory protein UreG 1 from Brucella abortus (strain 2308).